We begin with the raw amino-acid sequence, 446 residues long: Argininosuccinate synthase (446 aa).

Residues 17–25 and A43 contribute to the ATP site; that span reads AFSGGLDTS. Position 99 (Y99) interacts with L-citrulline. Residues G129 and T131 each contribute to the ATP site. 3 residues coordinate L-aspartate: T131, N135, and D136. N135 lines the L-citrulline pocket. D136 is an ATP binding site. L-citrulline-binding residues include R139 and S192. D194 contributes to the ATP binding site. The L-citrulline site is built by T201, E203, and E280.

Belongs to the argininosuccinate synthase family. Type 2 subfamily. As to quaternary structure, homotetramer.

The protein localises to the cytoplasm. The enzyme catalyses L-citrulline + L-aspartate + ATP = 2-(N(omega)-L-arginino)succinate + AMP + diphosphate + H(+). It participates in amino-acid biosynthesis; L-arginine biosynthesis; L-arginine from L-ornithine and carbamoyl phosphate: step 2/3. The chain is Argininosuccinate synthase from Burkholderia mallei (strain NCTC 10247).